The chain runs to 47 residues: PhoP/PhoQ regulator MgrB (47 aa).

A helical membrane pass occupies residues 6–26 (WLVLIVVVLACLVLWAQVINI).

This sequence belongs to the MgrB family. May form homooligomers. Probably interacts with the periplasmic domain of PhoQ.

It localises to the cell inner membrane. In terms of biological role, phoP-regulated transcription is redox-sensitive, being activated when the periplasm becomes more reducing. MgrB acts between DsbA/DsbB and PhoP/PhoQ in this pathway. Represses PhoP/PhoQ signaling, possibly by binding to the periplasmic domain of PhoQ, altering its activity and that of downstream effector PhoP. The chain is PhoP/PhoQ regulator MgrB from Escherichia fergusonii (strain ATCC 35469 / DSM 13698 / CCUG 18766 / IAM 14443 / JCM 21226 / LMG 7866 / NBRC 102419 / NCTC 12128 / CDC 0568-73).